A 1036-amino-acid polypeptide reads, in one-letter code: MKFFALFIQRPVATTLLSLAITLCGVLGFTLLPVSPLPQVDFPVISVYASLPGASPETMASSVATPLEHALGRIAGVNEMTSSSSLGSTNITLEFDLNRDINSAARDVQAALNAAQSLLPSGMPSRPHYYKVNPTDAPIMILTLTSDTYNQGQLYDFASTQLAQKIAQVEGVSEVSVGGSSLPAVRVELNPGVLFHQGVSLDAVRKAISNANVRRPQGYVDSEQQHWQIQMNDELKTAENYRPIIVHYNNNSPVRLQDVANVKDSVQNVRAAGMSGGEPAILLIIRREAGANIIATVNRIREQLPALHESIPASIQLKVAQDRTPTIRASIVEVERALVIAIGLVILVVFLFLRSGRATLIPAIAVPVSLIGTFTAMYLCGFSLNNLSLMALTVATGFVVDDAIVVLENISRHLEAGIKPMQAALQGVREVGFTVLSMSISLVAVFIPLLLMDGLVGRLFREFAITLTTSISISLLVSLTLTPMMCAHLLKSQRPKAQKKIRGFGKVLLKIQQVYGRSLMWVLNHSRWVLLILAGIIALNVWLYINIPKTFFPEQDTGRLLGFVRADQSISFQSMREKMKNFMQTINADPTVDSVIGFTGGGRVNNGFMFISLKPLKERSENAEQIISRLRIKLANEPGANLFLIPVQDIRAGGRQANASYQFTLLADDLNDLRKWEPVIRKALGQLPQLTDVNSDKEDKGAEMAIIYDRDTMSRLGINVSEANNLLNNAFGQRQISTIYQPLNQYKVVMEVAPEYTQDVSALEKMFVINNQGKAIPLSYFAHWQPANAPLSVNHQGLSAASTIAFNVPEGYTLSDAINAIERTTTELRVPSTVRGTFAGTAQIFQETLKSQLFLILAAIITVYLVLGILYESYIHPLTILSTLPSAGIGALLALELFDTPFSLIALIGIMLLIGIVKKNAIIMVDFAIEAQRNGNICARDAIFQASLLRFRPILMTTLAALFGSLPLVLSSGDGTELRQPLGITIVGGLVMSQLLTLYTTPVVYLCFDRLRAYPNRRNCCRQFEHGQRGKTGTYT.

Helical transmembrane passes span 12 to 34 (VATTLLSLAITLCGVLGFTLLPV), 336 to 353 (RALVIAIGLVILVVFLFL), 360 to 382 (LIPAIAVPVSLIGTFTAMYLCGF), 431 to 450 (VGFTVLSMSISLVAVFIPLL), 463 to 485 (FAITLTTSISISLLVSLTLTPMM), 528 to 547 (WVLLILAGIIALNVWLYINI), 853 to 875 (LFLILAAIITVYLVLGILYESYI), 895 to 917 (LELFDTPFSLIALIGIMLLIGIV), 949 to 971 (LRFRPILMTTLAALFGSLPLVLS), and 986 to 1008 (IVGGLVMSQLLTLYTTPVVYLCF).

The protein belongs to the resistance-nodulation-cell division (RND) (TC 2.A.6) family. MdtC subfamily. Part of a tripartite efflux system composed of MdtA, MdtB and MdtC. MdtC forms a heteromultimer with MdtB.

Its subcellular location is the cell inner membrane. This Photorhabdus laumondii subsp. laumondii (strain DSM 15139 / CIP 105565 / TT01) (Photorhabdus luminescens subsp. laumondii) protein is Multidrug resistance protein MdtC.